The primary structure comprises 481 residues: Ankyrin repeat, SAM and basic leucine zipper domain-containing protein 1 (481 aa).

Residues 1 to 10 (MASGALRGLA) are compositionally biased toward low complexity. The disordered stretch occupies residues 1 to 23 (MASGALRGLAVAGGGESSDSEDD). Phosphoserine occurs at positions 17, 18, and 20. ANK repeat units follow at residues 45–74 (EKSE…SVDS), 78–107 (YGWT…NASF), 110–144 (DKQT…DPNI), 148–177 (RLMT…EVNA), 181–210 (NGYT…NKML), and 214–243 (DGKI…PLEG). An SAM domain is found at 272–334 (SYTAFGDLEI…KILSALKELE (63 aa)).

As to quaternary structure, interacts with DDX4, PIWIL1, RANBP9 and TDRD1.

Its subcellular location is the cytoplasm. Plays a central role during spermatogenesis by repressing transposable elements and preventing their mobilization, which is essential for the germline integrity. Acts via the piRNA metabolic process, which mediates the repression of transposable elements during meiosis by forming complexes composed of piRNAs and Piwi proteins and governs the methylation and subsequent repression of transposons. Its association with pi-bodies suggests a participation in the primary piRNAs metabolic process. Required prior to the pachytene stage to facilitate the production of multiple types of piRNAs, including those associated with repeats involved in the regulation of retrotransposons. May act by mediating protein-protein interactions during germ cell maturation. This chain is Ankyrin repeat, SAM and basic leucine zipper domain-containing protein 1 (ASZ1), found in Eulemur macaco macaco (Black lemur).